A 92-amino-acid polypeptide reads, in one-letter code: Endoribonuclease HigB (92 aa).

H92 is an active-site residue.

Forms a complex with the antitoxin HigA which inhibits the mRNA interferase activity. The heterodimer dimerizes to form a HigB-(HigA)2-HigB tetramer that is able to bind to the DNA.

In terms of biological role, toxic component of a type II toxin-antitoxin (TA) system. A ribosome-associated translation-dependent mRNA interferase. Inhibits translation by sequence-specific cleavage of mRNA. Prefers either in-frame or out-of-frame 5'-AAA-3' codons (lysine). Also cleaves the first three AAAs of stretches of four or more A sequences. 20% of codons containing AA are cleaved and occassionally cuts even at a single A. The protein is Endoribonuclease HigB of Proteus vulgaris.